The chain runs to 261 residues: Cytochrome c oxidase subunit 3 (261 aa).

The Mitochondrial matrix portion of the chain corresponds to 1–15 (MTHQLHQYHLVDPSP). The chain crosses the membrane as a helical span at residues 16–34 (WPLTGAMGSLLLASGLAVW). Residues 35–40 (FHTNNT) are Mitochondrial intermembrane-facing. A helical membrane pass occupies residues 41 to 66 (MLLKFGLLTLLLTMFQWWRDIIREST). Residues 67–72 (YQGHHT) are Mitochondrial matrix-facing. A helical transmembrane segment spans residues 73–105 (SGVQKNMRYGMILFITSEVFFFLGFFWALYHVS). At 106 to 128 (LVPTPELGAEWPPIGITPLNPME) the chain is on the mitochondrial intermembrane side. Residues 129 to 152 (VPLLNTAVLLSSGATITWSHHTMM) traverse the membrane as a helical segment. Residues 153 to 155 (KGN) lie on the Mitochondrial matrix side of the membrane. The chain crosses the membrane as a helical span at residues 156–183 (KKEATHALMLTIILGAYFTALQLSEYME). Residues 184-190 (TPFTIAD) lie on the Mitochondrial intermembrane side of the membrane. Residues 191-223 (SVYGSLFFVATGFHGLHVMIGTSFLMVCALRLA) form a helical membrane-spanning segment. At 224–232 (KHHFTITHH) the chain is on the mitochondrial matrix side. A helical membrane pass occupies residues 233 to 256 (FGYEAAIWYWHFVDIVWLFLYISV). Topologically, residues 257-261 (YWWGS) are mitochondrial intermembrane.

It belongs to the cytochrome c oxidase subunit 3 family. Component of the cytochrome c oxidase (complex IV, CIV), a multisubunit enzyme composed of 14 subunits. The complex is composed of a catalytic core of 3 subunits MT-CO1, MT-CO2 and MT-CO3, encoded in the mitochondrial DNA, and 11 supernumerary subunits COX4I, COX5A, COX5B, COX6A, COX6B, COX6C, COX7A, COX7B, COX7C, COX8 and NDUFA4, which are encoded in the nuclear genome. The complex exists as a monomer or a dimer and forms supercomplexes (SCs) in the inner mitochondrial membrane with NADH-ubiquinone oxidoreductase (complex I, CI) and ubiquinol-cytochrome c oxidoreductase (cytochrome b-c1 complex, complex III, CIII), resulting in different assemblies (supercomplex SCI(1)III(2)IV(1) and megacomplex MCI(2)III(2)IV(2)).

It localises to the mitochondrion inner membrane. The enzyme catalyses 4 Fe(II)-[cytochrome c] + O2 + 8 H(+)(in) = 4 Fe(III)-[cytochrome c] + 2 H2O + 4 H(+)(out). Component of the cytochrome c oxidase, the last enzyme in the mitochondrial electron transport chain which drives oxidative phosphorylation. The respiratory chain contains 3 multisubunit complexes succinate dehydrogenase (complex II, CII), ubiquinol-cytochrome c oxidoreductase (cytochrome b-c1 complex, complex III, CIII) and cytochrome c oxidase (complex IV, CIV), that cooperate to transfer electrons derived from NADH and succinate to molecular oxygen, creating an electrochemical gradient over the inner membrane that drives transmembrane transport and the ATP synthase. Cytochrome c oxidase is the component of the respiratory chain that catalyzes the reduction of oxygen to water. Electrons originating from reduced cytochrome c in the intermembrane space (IMS) are transferred via the dinuclear copper A center (CU(A)) of subunit 2 and heme A of subunit 1 to the active site in subunit 1, a binuclear center (BNC) formed by heme A3 and copper B (CU(B)). The BNC reduces molecular oxygen to 2 water molecules using 4 electrons from cytochrome c in the IMS and 4 protons from the mitochondrial matrix. The protein is Cytochrome c oxidase subunit 3 (MT-CO3) of Lycodon semicarinatus (Ryukyu odd-tooth snake).